Here is a 153-residue protein sequence, read N- to C-terminus: Ribosome maturation factor RimP (153 aa).

Belongs to the RimP family.

It is found in the cytoplasm. Functionally, required for maturation of 30S ribosomal subunits. The protein is Ribosome maturation factor RimP of Vesicomyosocius okutanii subsp. Calyptogena okutanii (strain HA).